Here is a 152-residue protein sequence, read N- to C-terminus: UPF0178 protein SAS0646 (152 aa).

This sequence belongs to the UPF0178 family.

The chain is UPF0178 protein SAS0646 from Staphylococcus aureus (strain MSSA476).